We begin with the raw amino-acid sequence, 504 residues long: Glutamate--tRNA ligase (504 aa).

A 'HIGH' region motif is present at residues 12–22 (PSPTGALHIGG). The 'KMSKS' region signature appears at 260-264 (KLSKR). Lys-263 is a binding site for ATP.

This sequence belongs to the class-I aminoacyl-tRNA synthetase family. Glutamate--tRNA ligase type 1 subfamily. In terms of assembly, monomer.

The protein resides in the cytoplasm. It carries out the reaction tRNA(Glu) + L-glutamate + ATP = L-glutamyl-tRNA(Glu) + AMP + diphosphate. Its function is as follows. Catalyzes the attachment of glutamate to tRNA(Glu) in a two-step reaction: glutamate is first activated by ATP to form Glu-AMP and then transferred to the acceptor end of tRNA(Glu). In Bacteroides thetaiotaomicron (strain ATCC 29148 / DSM 2079 / JCM 5827 / CCUG 10774 / NCTC 10582 / VPI-5482 / E50), this protein is Glutamate--tRNA ligase.